The following is a 204-amino-acid chain: Guanylate kinase (204 aa).

One can recognise a Guanylate kinase-like domain in the interval 5–184; that stretch reads GLLLVLSGPS…AVDHIKSIVE (180 aa). 12 to 19 lines the ATP pocket; that stretch reads GPSGVGKG.

Belongs to the guanylate kinase family.

The protein localises to the cytoplasm. The enzyme catalyses GMP + ATP = GDP + ADP. Essential for recycling GMP and indirectly, cGMP. The protein is Guanylate kinase of Lactobacillus johnsonii (strain CNCM I-12250 / La1 / NCC 533).